Reading from the N-terminus, the 563-residue chain is Anaerobic glycerol-3-phosphate dehydrogenase subunit A (563 aa).

20-48 (DVIIIGGGATGAGIARDCALRGIDCILLE) provides a ligand contact to FAD.

The protein belongs to the FAD-dependent glycerol-3-phosphate dehydrogenase family. Composed of a catalytic GlpA/B dimer and of membrane bound GlpC. FAD serves as cofactor. The cofactor is FMN.

It localises to the cell inner membrane. The catalysed reaction is a quinone + sn-glycerol 3-phosphate = dihydroxyacetone phosphate + a quinol. It participates in polyol metabolism; glycerol degradation via glycerol kinase pathway; glycerone phosphate from sn-glycerol 3-phosphate (anaerobic route): step 1/1. This chain is Anaerobic glycerol-3-phosphate dehydrogenase subunit A (glpA), found in Haemophilus influenzae (strain ATCC 51907 / DSM 11121 / KW20 / Rd).